Reading from the N-terminus, the 202-residue chain is Glycerol-3-phosphate acyltransferase (202 aa).

Transmembrane regions (helical) follow at residues 3–23 (ILLATVAAYLIGSVSFAVVVS), 51–71 (KAAILTLVGDAFKGWLAVWLV), 74–94 (FGIGGEIGVALAAIAVFLGHL), 116–136 (AVHPALGLATALTWLIIAFFF), and 140–160 (SLAALVAAVFAPVFDVFLFGT).

It belongs to the PlsY family. Probably interacts with PlsX.

The protein resides in the cell inner membrane. It catalyses the reaction an acyl phosphate + sn-glycerol 3-phosphate = a 1-acyl-sn-glycero-3-phosphate + phosphate. It functions in the pathway lipid metabolism; phospholipid metabolism. Catalyzes the transfer of an acyl group from acyl-phosphate (acyl-PO(4)) to glycerol-3-phosphate (G3P) to form lysophosphatidic acid (LPA). This enzyme utilizes acyl-phosphate as fatty acyl donor, but not acyl-CoA or acyl-ACP. The chain is Glycerol-3-phosphate acyltransferase from Burkholderia thailandensis (strain ATCC 700388 / DSM 13276 / CCUG 48851 / CIP 106301 / E264).